Consider the following 331-residue polypeptide: Proline-rich protein 33 (331 aa).

Disordered regions lie at residues 1–112 (MGPQ…SVPR), 128–185 (SLES…PKVA), and 204–247 (APEP…APAS). The span at 94-105 (PEEPPVPRPPPG) shows a compositional bias: pro residues. Residues 149–169 (PPMAGPAAEAERVSSPAWASS) are compositionally biased toward low complexity. Over residues 170-185 (PTPPSGPHPCPVPKVA) the composition is skewed to pro residues. A compositionally biased stretch (low complexity) spans 217 to 238 (EPEVPTPTEQEVPAPTEQEVPA).

This chain is Proline-rich protein 33 (PRR33), found in Homo sapiens (Human).